Reading from the N-terminus, the 422-residue chain is Dihydroorotase (422 aa).

The Zn(2+) site is built by His-59 and His-61. Substrate is bound by residues 61–63 (HFR) and Asn-93. The Zn(2+) site is built by Asp-150, His-177, and His-230. Asn-276 serves as a coordination point for substrate. Asp-303 serves as a coordination point for Zn(2+). The active site involves Asp-303. Position 307 (His-307) interacts with substrate.

This sequence belongs to the metallo-dependent hydrolases superfamily. DHOase family. Class I DHOase subfamily. Zn(2+) is required as a cofactor.

It carries out the reaction (S)-dihydroorotate + H2O = N-carbamoyl-L-aspartate + H(+). Its pathway is pyrimidine metabolism; UMP biosynthesis via de novo pathway; (S)-dihydroorotate from bicarbonate: step 3/3. Its function is as follows. Catalyzes the reversible cyclization of carbamoyl aspartate to dihydroorotate. In Streptococcus pyogenes serotype M3 (strain ATCC BAA-595 / MGAS315), this protein is Dihydroorotase.